Consider the following 660-residue polypeptide: V-type ATP synthase subunit I (660 aa).

7 helical membrane-spanning segments follow: residues 312–332 (FFAF…GLLF), 362–382 (ILGL…GMSF), 453–473 (FIDN…LSLG), 485–505 (IGWI…LGTV), 520–540 (GQIG…LAMI), 560–580 (VLSY…GATF), and 593–613 (SIVI…GGVI).

It belongs to the V-ATPase 116 kDa subunit family.

Its subcellular location is the cell membrane. Its function is as follows. Produces ATP from ADP in the presence of a proton gradient across the membrane. The protein is V-type ATP synthase subunit I (atpI) of Chlamydia pneumoniae (Chlamydophila pneumoniae).